A 262-amino-acid chain; its full sequence is Pimeloyl-[acyl-carrier protein] methyl ester esterase (262 aa).

Residues 15–242 form the AB hydrolase-1 domain; that stretch reads HLVLLHGWGL…AAHAPFISHP (228 aa). Substrate-binding positions include Trp-22, 82 to 83, and 143 to 147; these read SL and FLALQ. The active-site Nucleophile is Ser-82. Residues Asp-207 and His-235 contribute to the active site. His-235 is a substrate binding site.

It belongs to the AB hydrolase superfamily. Carboxylesterase BioH family. Monomer.

It localises to the cytoplasm. It catalyses the reaction 6-carboxyhexanoyl-[ACP] methyl ester + H2O = 6-carboxyhexanoyl-[ACP] + methanol + H(+). It functions in the pathway cofactor biosynthesis; biotin biosynthesis. The physiological role of BioH is to remove the methyl group introduced by BioC when the pimeloyl moiety is complete. It allows to synthesize pimeloyl-ACP via the fatty acid synthetic pathway through the hydrolysis of the ester bonds of pimeloyl-ACP esters. This chain is Pimeloyl-[acyl-carrier protein] methyl ester esterase, found in Shigella flexneri.